We begin with the raw amino-acid sequence, 708 residues long: Lactotransferrin (708 aa).

A signal peptide spans 1–19 (MKLFFPALLSLGALGLCLA). 2 Transferrin-like domains span residues 25–352 (VRWC…GLRE) and 364–693 (VVWC…KLRR). Cystine bridges form between Cys28–Cys64 and Cys38–Cys55. An interaction with E.coli ompC region spans residues 44–51 (RMKKVRGP). Asp79 contacts Fe(3+). Lys92 is a catalytic residue. Fe(3+) is bound at residue Tyr111. 5 cysteine pairs are disulfide-bonded: Cys134–Cys217, Cys176–Cys192, Cys179–Cys202, Cys189–Cys200, and Cys250–Cys264. Hydrogencarbonate contacts are provided by Thr136, Arg140, Ala142, and Gly143. Residue Tyr211 participates in Fe(3+) binding. An N-linked (GlcNAc...) asparagine glycan is attached at Asn252. His272 is a Fe(3+) binding site. Ser278 (nucleophile) is an active-site residue. Intrachain disulfides connect Cys367/Cys399 and Cys377/Cys390. Asn385 is a glycosylation site (N-linked (GlcNAc...) asparagine). Fe(3+) contacts are provided by Asp414 and Tyr452. Intrachain disulfides connect Cys424–Cys703, Cys444–Cys666, Cys476–Cys551, Cys500–Cys694, Cys510–Cys524, Cys521–Cys534, Cys592–Cys606, and Cys644–Cys649. Hydrogencarbonate-binding residues include Thr478, Arg482, Ala484, and Gly485. Asn537 carries an N-linked (GlcNAc...) asparagine glycan. Residue Tyr545 participates in Fe(3+) binding. Asn594 carries N-linked (GlcNAc...) asparagine glycosylation. His614 contributes to the Fe(3+) binding site.

Belongs to the transferrin family. Monomer. Found in a complex with LTF, CLU, EPPIN and SEMG1. Interacts with E.coli outer membrane protein C (OmpC). Found in a complex with MPO and LTF; interacts directly with CP, allows Fe(3+) incorporation into LTF and activation of CP ferroxidase activity. In terms of processing, poly-N-acetyllactosaminic carbohydrate moiety seems to be needed for TLR4 activation.

The protein localises to the secreted. Its subcellular location is the cytoplasmic granule. Transferrins are iron binding transport proteins which can bind two Fe(3+) ions in association with the binding of an anion, usually bicarbonate. Functionally, major iron-binding and multifunctional protein found in exocrine fluids such as breast milk and mucosal secretions. Has antimicrobial activity, which depends on the extracellular cation concentration. Antimicrobial properties include bacteriostasis, which is related to its ability to sequester free iron and thus inhibit microbial growth, as well as direct bactericidal properties leading to the release of lipopolysaccharides from the bacterial outer membrane. Can also prevent bacterial biofilm development in P.aeruginosa infection. Has weak antifungal activity against C.albicans. Has anabolic, differentiating and anti-apoptotic effects on osteoblasts and can also inhibit osteoclastogenesis, possibly playing a role in the regulation of bone growth. Promotes binding of species C adenoviruses to epithelial cells, promoting adenovirus infection. Can inhibit papillomavirus infections. Stimulates the TLR4 signaling pathway leading to NF-kappa-B activation and subsequent pro-inflammatory cytokine production while also interfering with the lipopolysaccharide (LPS)-stimulated TLR4 signaling. Inhibits neutrophil granulocyte migration to sites of apoptosis, when secreted by apoptotic cells. Stimulates VEGFA-mediated endothelial cell migration and proliferation. Binds heparin, chondroitin sulfate and possibly other glycosaminoglycans (GAGs). Also binds specifically to pneumococcal surface protein A (PspA), the lipid A portion of bacterial lipopolysaccharide (LPS), lysozyme and DNA. In terms of biological role, lactoferricin binds to the bacterial surface and is crucial for the bactericidal functions. Has some antiviral activity against papillomavirus infection. N-terminal region shows strong antifungal activity against C.albicans. Contains two BBXB heparin-binding consensus sequences that appear to form the predominate functional GAG-binding site. Its function is as follows. The lactotransferrin transferrin-like domain 1 functions as a serine protease of the peptidase S60 family that cuts arginine rich regions. This function contributes to the antimicrobial activity. Shows a preferential cleavage at -Arg-Ser-Arg-Arg-|- and -Arg-Arg-Ser-Arg-|-, and of Z-Phe-Arg-|-aminomethylcoumarin sites. The sequence is that of Lactotransferrin (LTF) from Camelus dromedarius (Dromedary).